The sequence spans 892 residues: Alanine--tRNA ligase (892 aa).

Residues histidine 596, histidine 600, cysteine 700, and histidine 704 each coordinate Zn(2+).

It belongs to the class-II aminoacyl-tRNA synthetase family. The cofactor is Zn(2+).

It localises to the cytoplasm. The enzyme catalyses tRNA(Ala) + L-alanine + ATP = L-alanyl-tRNA(Ala) + AMP + diphosphate. Catalyzes the attachment of alanine to tRNA(Ala) in a two-step reaction: alanine is first activated by ATP to form Ala-AMP and then transferred to the acceptor end of tRNA(Ala). Also edits incorrectly charged Ser-tRNA(Ala) and Gly-tRNA(Ala) via its editing domain. The polypeptide is Alanine--tRNA ligase (Methanococcus maripaludis (strain C6 / ATCC BAA-1332)).